We begin with the raw amino-acid sequence, 328 residues long: Biotin synthase (328 aa).

One can recognise a Radical SAM core domain in the interval 43–272; the sequence is NVVQKASLLS…KSTVRLSAGR (230 aa). [4Fe-4S] cluster contacts are provided by Cys58, Cys62, and Cys65. Positions 103, 135, 195, and 267 each coordinate [2Fe-2S] cluster.

The protein belongs to the radical SAM superfamily. Biotin synthase family. In terms of assembly, homodimer. The cofactor is [4Fe-4S] cluster. [2Fe-2S] cluster is required as a cofactor.

It catalyses the reaction (4R,5S)-dethiobiotin + (sulfur carrier)-SH + 2 reduced [2Fe-2S]-[ferredoxin] + 2 S-adenosyl-L-methionine = (sulfur carrier)-H + biotin + 2 5'-deoxyadenosine + 2 L-methionine + 2 oxidized [2Fe-2S]-[ferredoxin]. Its pathway is cofactor biosynthesis; biotin biosynthesis; biotin from 7,8-diaminononanoate: step 2/2. Its function is as follows. Catalyzes the conversion of dethiobiotin (DTB) to biotin by the insertion of a sulfur atom into dethiobiotin via a radical-based mechanism. In Allorhizobium ampelinum (strain ATCC BAA-846 / DSM 112012 / S4) (Agrobacterium vitis (strain S4)), this protein is Biotin synthase.